Reading from the N-terminus, the 118-residue chain is Small ribosomal subunit protein uS13 (118 aa).

A disordered region spans residues 91 to 118 (HRHSLPVRGQRTKTNARTRKGPRKPIRK).

Belongs to the universal ribosomal protein uS13 family. As to quaternary structure, part of the 30S ribosomal subunit. Forms a loose heterodimer with protein S19. Forms two bridges to the 50S subunit in the 70S ribosome.

Located at the top of the head of the 30S subunit, it contacts several helices of the 16S rRNA. In the 70S ribosome it contacts the 23S rRNA (bridge B1a) and protein L5 of the 50S subunit (bridge B1b), connecting the 2 subunits; these bridges are implicated in subunit movement. Contacts the tRNAs in the A and P-sites. This chain is Small ribosomal subunit protein uS13, found in Hahella chejuensis (strain KCTC 2396).